Here is a 408-residue protein sequence, read N- to C-terminus: Aminoacylase-1 (408 aa).

H80 contacts Zn(2+). D82 is an active-site residue. A Zn(2+)-binding site is contributed by D113. E147 serves as the catalytic Proton acceptor. Residues E148, E175, and H373 each coordinate Zn(2+).

It belongs to the peptidase M20A family. As to quaternary structure, homodimer. Interacts with SPHK1. It depends on Zn(2+) as a cofactor.

It is found in the cytoplasm. The catalysed reaction is an N-acyl-L-amino acid + H2O = an L-alpha-amino acid + a carboxylate. The enzyme catalyses N-acetyl-L-methionine + H2O = L-methionine + acetate. It carries out the reaction N-acetyl-L-glutamine + H2O = L-glutamine + acetate. Catalyzes the hydrolysis of N-acetylated amino acids to acetate and free amino acids. The sequence is that of Aminoacylase-1 (Acy1) from Mus musculus (Mouse).